A 234-amino-acid polypeptide reads, in one-letter code: HTH-type transcriptional regulator ArcR (234 aa).

40 to 129 is an a nucleoside 3',5'-cyclic phosphate binding site; it reads VRHYTKGQVI…MAFLCKANDD (90 aa). Residues 155 to 228 form the HTH crp-type domain; it reads KFAKDRIIKL…HKNWLVSKHL (74 aa). The H-T-H motif DNA-binding region spans 188-207; the sequence is IQLMSDMAGISRETAGHIIH.

The protein localises to the cytoplasm. Functionally, positively regulates the expression of the arcABDCR operon under anaerobic conditions, thus playing an essential role in arginine catabolism. May also control the expression of genes encoding proteins which are involved in anaerobic metabolism. Can bind cyclic AMP. The protein is HTH-type transcriptional regulator ArcR (arcR) of Staphylococcus aureus (strain MSSA476).